Here is a 210-residue protein sequence, read N- to C-terminus: Redox-sensing transcriptional repressor Rex (210 aa).

The segment at residues 15-54 (LYYRIFKRFNTDGIEKASSKQIADALGIDSATVRRDFSYF) is a DNA-binding region (H-T-H motif). 89–94 (GCGNIG) lines the NAD(+) pocket.

This sequence belongs to the transcriptional regulatory Rex family. In terms of assembly, homodimer.

Its subcellular location is the cytoplasm. In terms of biological role, modulates transcription in response to changes in cellular NADH/NAD(+) redox state. The protein is Redox-sensing transcriptional repressor Rex of Streptococcus agalactiae serotype Ia (strain ATCC 27591 / A909 / CDC SS700).